Here is a 300-residue protein sequence, read N- to C-terminus: GTPase Era (300 aa).

The Era-type G domain maps to 7 to 175 (KSGFAVMAGL…KTAVAETLPF (169 aa)). Residues 15–22 (GLPNAGKS) are G1. 15–22 (GLPNAGKS) contacts GTP. A G2 region spans residues 41-45 (QMTRQ). The segment at 62–65 (DTPG) is G3. GTP contacts are provided by residues 62 to 66 (DTPGF) and 124 to 127 (NKAD). Residues 124–127 (NKAD) are G4. The tract at residues 154-156 (ISA) is G5. The region spanning 198–283 (IREQIFNLYE…RLELEVSVEP (86 aa)) is the KH type-2 domain.

It belongs to the TRAFAC class TrmE-Era-EngA-EngB-Septin-like GTPase superfamily. Era GTPase family. Monomer.

The protein localises to the cytoplasm. It is found in the cell inner membrane. An essential GTPase that binds both GDP and GTP, with rapid nucleotide exchange. Plays a role in 16S rRNA processing and 30S ribosomal subunit biogenesis and possibly also in cell cycle regulation and energy metabolism. This chain is GTPase Era, found in Elusimicrobium minutum (strain Pei191).